The following is a 384-amino-acid chain: GDP/UDP-N,N'-diacetylbacillosamine 2-epimerase (hydrolyzing) (384 aa).

This sequence belongs to the UDP-N-acetylglucosamine 2-epimerase family.

The catalysed reaction is GDP-N,N'-diacetylbacillosamine + H2O = 2,4-diacetamido-2,4,6-trideoxy-alpha-D-mannopyranose + GDP + H(+). It carries out the reaction UDP-N,N'-diacetylbacillosamine + H2O = 2,4-diacetamido-2,4,6-trideoxy-alpha-D-mannopyranose + UDP + H(+). Involved in biosynthesis of legionaminic acid (5,7-diamino-3,5,7,9-tetradeoxy-D-glycero-D-galacto-non-2-ulosonic acid)(Leg), a sialic acid-like derivative that is incorporated into flagellin via O-linkage to Ser/Thr. Catalyzes the conversion of GDP-N,N'-diacetylbacillosamine (Bac2Ac4Ac) into 2,4-diacetamido-2,4,6-trideoxymannose and GDP. It can also use UDP-N,N'-diacetylbacillosamine however it generates small quantities of 2,4-diacetamido-2,4,6-trideoxymannose. The protein is GDP/UDP-N,N'-diacetylbacillosamine 2-epimerase (hydrolyzing) (legG) of Campylobacter jejuni subsp. jejuni serotype O:2 (strain ATCC 700819 / NCTC 11168).